The following is a 271-amino-acid chain: Aquaporin-11 (271 aa).

Over 1-14 (MSPLLGLRSELQDT) the chain is Cytoplasmic. A helical transmembrane segment spans residues 15-35 (CTSLGLMLSVVLLMGLARVVA). The Lumenal portion of the chain corresponds to 36-41 (RQQLHR). A helical transmembrane segment spans residues 42–62 (PVAHAFVLEFLATFQLCCCTH). The Cytoplasmic segment spans residues 63–74 (ELQLLSEQHPAH). The chain crosses the membrane as a helical span at residues 75 to 95 (PTWTLTLVYFFSLVHGLTLVG). Topologically, residues 96–163 (TSSNPCGVMM…ACKNPIRVDL (68 aa)) are lumenal. Residues 99–101 (NPC) carry the NPC motif. The chain crosses the membrane as a helical span at residues 164-184 (LKAVITEAVCSFLFHSALLHF). The Cytoplasmic portion of the chain corresponds to 185–194 (QEVRTKLRIH). The helical transmembrane segment at 195 to 215 (LLAALITFLVYAGGSLTGAVF) threads the bilayer. The short motif at 216-218 (NPA) is the NPA element. The Lumenal portion of the chain corresponds to 216 to 234 (NPALALSLHFMCFDEAFPQ). A helical transmembrane segment spans residues 235-255 (FFIVYWLAPSLGILLMILMFS). The Cytoplasmic segment spans residues 256–271 (FFLPWLHNNHTINKKE).

Belongs to the MIP/aquaporin (TC 1.A.8) family. AQP11/AQP12 subfamily. As to quaternary structure, homodimer; disulfide-linked. Homotetramer. Can also form homomultimer. In terms of processing, not glycosylated. In terms of tissue distribution, detected in the sperm head and tail (at protein level). Expressed in subcutaneous adipocytes. Expressed in testis, kidney and ejaculated spermatozoa.

The protein resides in the endoplasmic reticulum membrane. The protein localises to the cytoplasmic vesicle membrane. Its subcellular location is the cell membrane. It catalyses the reaction H2O(in) = H2O(out). The enzyme catalyses glycerol(in) = glycerol(out). The catalysed reaction is H2O2(out) = H2O2(in). Functionally, channel protein that facilitates the transport of water, glycerol and hydrogen peroxide across membrane of cell or organelles guaranteeing intracellular homeostasis in several organes like liver, kidney and brain. In situation of stress, participates in endoplasmic reticulum (ER) homeostasis by regulating redox homeostasis through the transport of hydrogen peroxide across the endoplasmic reticulum membrane thereby regulating the oxidative stress through the NADPH oxidase 2 pathway. Plays a role by maintaining an environment suitable for translation or protein foldings in the ER lumen namely by participating in the PKD1 glycosylation processing resulting in regulation of PKD1 membrane trafficking thereby preventing the accumulation of unfolding protein in ER. Plays a role in the proximal tubule function by regulating its endosomal acidification. May play a role in postnatal kidney development. The chain is Aquaporin-11 from Homo sapiens (Human).